We begin with the raw amino-acid sequence, 190 residues long: Peptidyl-tRNA hydrolase (190 aa).

Tyrosine 14 lines the tRNA pocket. Histidine 19 functions as the Proton acceptor in the catalytic mechanism. TRNA-binding residues include tyrosine 64, asparagine 66, and asparagine 112.

It belongs to the PTH family. As to quaternary structure, monomer.

The protein resides in the cytoplasm. The catalysed reaction is an N-acyl-L-alpha-aminoacyl-tRNA + H2O = an N-acyl-L-amino acid + a tRNA + H(+). In terms of biological role, hydrolyzes ribosome-free peptidyl-tRNAs (with 1 or more amino acids incorporated), which drop off the ribosome during protein synthesis, or as a result of ribosome stalling. Catalyzes the release of premature peptidyl moieties from peptidyl-tRNA molecules trapped in stalled 50S ribosomal subunits, and thus maintains levels of free tRNAs and 50S ribosomes. The chain is Peptidyl-tRNA hydrolase from Chlorobium phaeobacteroides (strain DSM 266 / SMG 266 / 2430).